Reading from the N-terminus, the 224-residue chain is UPF0758 protein Avin_02940 (224 aa).

An MPN domain is found at 102 to 224 (ALESPQAVRD…PLSMAEQGWL (123 aa)). Residues His-173, His-175, and Asp-186 each coordinate Zn(2+). The JAMM motif motif lies at 173 to 186 (HNHPSGIAEPSQAD).

It belongs to the UPF0758 family.

In Azotobacter vinelandii (strain DJ / ATCC BAA-1303), this protein is UPF0758 protein Avin_02940.